The sequence spans 148 residues: Calmodulin-4 (148 aa).

EF-hand domains lie at 8–43 (EEVA…LGKN), 44–79 (LPEK…YKKG), 80–115 (HRAG…LGES), and 116–148 (LSQE…HVEN). Positions 21, 23, 25, 27, 32, 57, 59, 61, 63, 68, 93, 95, 97, 99, and 104 each coordinate Ca(2+).

Its function is as follows. Implicated in the early stage of ectopic ossification. The polypeptide is Calmodulin-4 (Calm4) (Mus musculus (Mouse)).